Consider the following 283-residue polypeptide: Homeobox-leucine zipper protein HAT2 (283 aa).

Positions 64-134 (VNCEEDTGVS…GETSRKKLRL (71 aa)) are disordered. A compositionally biased stretch (low complexity) spans 73–84 (SSPNSTISSTIS). A DNA-binding region (homeobox) is located at residues 127–186 (TSRKKLRLSKDQSAFLEETFKEHNTLNPKQKLALAKKLNLTARQVEVWFQNRRARTKLKQ). A leucine-zipper region spans residues 194-215 (LKRCVEKLTEENRRLQKEAMEL).

Belongs to the HD-ZIP homeobox family. Class II subfamily. As to quaternary structure, interacts with RBR1.

It is found in the nucleus. In terms of biological role, probable transcription factor that plays a role in auxin-mediated morphogenesis. Negatively regulates lateral root elongation. In Arabidopsis thaliana (Mouse-ear cress), this protein is Homeobox-leucine zipper protein HAT2 (HAT2).